Reading from the N-terminus, the 314-residue chain is Ornithine carbamoyltransferase (314 aa).

Carbamoyl phosphate-binding positions include 58–61, Q85, R109, and 136–139; these read STRT and HPAQ. Residues N169, D233, and 237 to 238 each bind L-ornithine; that span reads SM. Residues 273-274 and R301 contribute to the carbamoyl phosphate site; that span reads CL.

Belongs to the aspartate/ornithine carbamoyltransferase superfamily. OTCase family.

It localises to the cytoplasm. The enzyme catalyses carbamoyl phosphate + L-ornithine = L-citrulline + phosphate + H(+). It functions in the pathway amino-acid degradation; L-arginine degradation via ADI pathway; carbamoyl phosphate from L-arginine: step 2/2. Its function is as follows. Reversibly catalyzes the transfer of the carbamoyl group from carbamoyl phosphate (CP) to the N(epsilon) atom of ornithine (ORN) to produce L-citrulline. The chain is Ornithine carbamoyltransferase from Staphylothermus marinus (strain ATCC 43588 / DSM 3639 / JCM 9404 / F1).